A 142-amino-acid polypeptide reads, in one-letter code: Hemoglobin subunit alpha-A (142 aa).

One can recognise a Globin domain in the interval 2–142 (VLSAADKTNV…VATVLTAKYR (141 aa)). His-59 contacts O2. Residue His-88 participates in heme b binding.

The protein belongs to the globin family. Heterotetramer of two alpha chains and two beta chains. In terms of tissue distribution, red blood cells.

Involved in oxygen transport from the lung to the various peripheral tissues. This Apus apus (Common swift) protein is Hemoglobin subunit alpha-A (HBAA).